A 183-amino-acid chain; its full sequence is Large ribosomal subunit protein uL5 (183 aa).

This sequence belongs to the universal ribosomal protein uL5 family. As to quaternary structure, part of the 50S ribosomal subunit; part of the 5S rRNA/L5/L18/L25 subcomplex. Contacts the 5S rRNA and the P site tRNA. Forms a bridge to the 30S subunit in the 70S ribosome.

In terms of biological role, this is one of the proteins that bind and probably mediate the attachment of the 5S RNA into the large ribosomal subunit, where it forms part of the central protuberance. In the 70S ribosome it contacts protein S13 of the 30S subunit (bridge B1b), connecting the 2 subunits; this bridge is implicated in subunit movement. Contacts the P site tRNA; the 5S rRNA and some of its associated proteins might help stabilize positioning of ribosome-bound tRNAs. The polypeptide is Large ribosomal subunit protein uL5 (Legionella pneumophila (strain Lens)).